We begin with the raw amino-acid sequence, 179 residues long: uncharacterized protein (179 aa).

Positions Ala-1–Ser-10 are enriched in polar residues. Disordered stretches follow at residues Ala-1–Cys-35, Val-59–Thr-80, and Glu-131–Arg-179. The span at Leu-23–Gly-33 shows a compositional bias: basic residues. The segment covering Thr-149–Arg-158 has biased composition (basic residues).

This is an uncharacterized protein from Human cytomegalovirus (strain AD169) (HHV-5).